The sequence spans 446 residues: N-succinylarginine dihydrolase (446 aa).

Residues 19 to 28, Asn-110, and 137 to 138 contribute to the substrate site; these read AGLSFGNVAS and HR. Residue Glu-174 is part of the active site. Arg-213 lines the substrate pocket. His-249 is a catalytic residue. Asp-251 and Asn-364 together coordinate substrate. Catalysis depends on Cys-370, which acts as the Nucleophile.

It belongs to the succinylarginine dihydrolase family. In terms of assembly, homodimer.

It catalyses the reaction N(2)-succinyl-L-arginine + 2 H2O + 2 H(+) = N(2)-succinyl-L-ornithine + 2 NH4(+) + CO2. It participates in amino-acid degradation; L-arginine degradation via AST pathway; L-glutamate and succinate from L-arginine: step 2/5. Its function is as follows. Catalyzes the hydrolysis of N(2)-succinylarginine into N(2)-succinylornithine, ammonia and CO(2). The polypeptide is N-succinylarginine dihydrolase (Burkholderia ambifaria (strain MC40-6)).